Reading from the N-terminus, the 96-residue chain is MKSLHDVLKRPVITERTTDMMAEKKYVFEVPLKANKTEIKQAVEKVFGVKVEAVNTVRVPAKPKRYGKYSGYTSEWKKAIVKLTDDSKELAFYEGV.

The protein belongs to the universal ribosomal protein uL23 family. As to quaternary structure, part of the 50S ribosomal subunit. Contacts protein L29, and trigger factor when it is bound to the ribosome.

Its function is as follows. One of the early assembly proteins it binds 23S rRNA. One of the proteins that surrounds the polypeptide exit tunnel on the outside of the ribosome. Forms the main docking site for trigger factor binding to the ribosome. The sequence is that of Large ribosomal subunit protein uL23 from Brevibacillus brevis (strain 47 / JCM 6285 / NBRC 100599).